The following is a 105-amino-acid chain: uncharacterized protein (105 aa).

Positions serine 31–valine 47 are enriched in low complexity. The interval serine 31–proline 80 is disordered. Basic and acidic residues predominate over residues isoleucine 54–alanine 66.

This is an uncharacterized protein from Caenorhabditis elegans.